Reading from the N-terminus, the 475-residue chain is 1,3-beta-glucanosyltransferase gel2 (475 aa).

Positions 1-21 (MLPTYVRLFTAVCALATTASA) are cleaved as a signal peptide. A disulfide bond links Cys69 and Cys98. Residues Tyr87, Asn159, Glu160, and Asp201 each contribute to the (1,3-beta-D-glucosyl)n site. Glu160 (proton donor) is an active-site residue. Cystine bridges form between Cys215-Cys350 and Cys234-Cys265. Residue Asn236 is glycosylated (N-linked (GlcNAc...) asparagine). Catalysis depends on Glu262, which acts as the Nucleophile. Tyr294 contributes to the (1,3-beta-D-glucosyl)n binding site. N-linked (GlcNAc...) asparagine glycans are attached at residues Asn311, Asn339, and Asn357. A disordered region spans residues 420-451 (GESNTPGAHSSGSTSGSSSSGGSSSSSSDKES). Low complexity predominate over residues 429-446 (SSGSTSGSSSSGGSSSSS). The GPI-like-anchor amidated serine moiety is linked to residue Ser451. The propeptide at 452–475 (AAGTISVPFVGLLSAASFMAFFML) is removed in mature form.

Belongs to the glycosyl hydrolase 72 family. In terms of processing, the GPI-like anchor contains a phosphoceramide lipid group.

Its subcellular location is the cell membrane. In terms of biological role, splits internally a 1,3-beta-glucan molecule and transfers the newly generated reducing end (the donor) to the non-reducing end of another 1,3-beta-glucan molecule (the acceptor) forming a 1,3-beta linkage, resulting in the elongation of 1,3-beta-glucan chains in the cell wall. Involved in cell wall morphogenesis. This is 1,3-beta-glucanosyltransferase gel2 (gel2) from Aspergillus fumigatus (strain CBS 144.89 / FGSC A1163 / CEA10) (Neosartorya fumigata).